The chain runs to 393 residues: Cyclic GMP-AMP synthase-like receptor 1 (393 aa).

Glu-89, Asp-91, and Asp-205 together coordinate Mg(2+). ATP is bound at residue Glu-89 to Asp-91. GTP contacts are provided by residues Asp-205 and Arg-251–Glu-258. ATP-binding positions include Tyr-255 to Glu-258, Lys-276, and Ser-289 to Lys-293.

It belongs to the mab-21 family. The cofactor is Mg(2+). It depends on Mn(2+) as a cofactor.

It carries out the reaction GTP + ATP = 3',2'-cGAMP + 2 diphosphate. The enzyme catalyses GTP + ATP = pppA(2'-5')pG + diphosphate. It catalyses the reaction pppA(2'-5')pG = 3',2'-cGAMP + diphosphate. The enzyme activity is specifically activated by double-stranded RNA (dsRNA). Recognizes long dsRNA (&gt;30 bp) with no preference for 5' RNA phosphorylation. Its function is as follows. Nucleotidyltransferase that catalyzes the formation of cyclic GMP-AMP (3',2'-cGAMP) from ATP and GTP and plays a key role in innate immunity. Synthesizes 3',2'-cGAMP in a two-step reaction through production of the linear intermediate pppA(2'-5')pG. Acts as a key sensor of double-stranded RNA (dsRNA), the presence of dsRNA in the cytoplasm being a danger signal that triggers the immune responses. Directly binds dsRNA longer than 35 bp, activating the nucleotidyltransferase activity, leading to synthesis of 3',2'-cGAMP, a second messenger that binds to and activates Sting, thereby triggering the antiviral immune response via activation of the NF-kappa-B transcription factor Rel (Relish). In Drosophila simulans (Fruit fly), this protein is Cyclic GMP-AMP synthase-like receptor 1.